Here is a 277-residue protein sequence, read N- to C-terminus: Cation-dependent mannose-6-phosphate receptor (277 aa).

Residues 1-26 (MFPFYSCWRTGLLLLLLAVAVRESWQ) form the signal peptide. The Lumenal segment spans residues 27 to 185 (TEEKTCDLVG…SLACSPEISH (159 aa)). The MRH domain maps to 30 to 181 (KTCDLVGEKG…EMDSSLACSP (152 aa)). C32 and C78 are joined by a disulfide. Residues N57, N83, N94, N107, and N113 are each glycosylated (N-linked (GlcNAc...) asparagine). 2 disulfide bridges follow: C132-C167 and C145-C179. The helical transmembrane segment at 186 to 210 (LSVGSILLVTFASLVAVYVVGGFLY) threads the bilayer. Over 211–277 (QRLVVGAKGM…EERDDHLLPM (67 aa)) the chain is Cytoplasmic. The disordered stretch occupies residues 256 to 277 (RGVGDDQLGEESEERDDHLLPM). Position 267 is a phosphoserine (S267).

Homodimer. Binds GGA1, GGA2 and GGA3.

It localises to the lysosome membrane. In terms of biological role, transport of phosphorylated lysosomal enzymes from the Golgi complex and the cell surface to lysosomes. Lysosomal enzymes bearing phosphomannosyl residues bind specifically to mannose-6-phosphate receptors in the Golgi apparatus and the resulting receptor-ligand complex is transported to an acidic prelyosomal compartment where the low pH mediates the dissociation of the complex. This Homo sapiens (Human) protein is Cation-dependent mannose-6-phosphate receptor (M6PR).